The sequence spans 491 residues: MATFKDACYHYKKLNKLNGLVLKLGANDAWRPAPVAKYKGWCLDCCQHTDLTYCRGCALFHVCQWCSRYNRCFLDEEPHLLRMRTFRNEINKEDVEGLINMYNIIFPINERVVDKFINNVKQRKCRNELLIEWYNHLLLPITLQALSIELEGDVYYIFGYYDCMGKENQTPFHFVNMINRYDRLLLDDKNFDRMMHLPVALQQEYALRYFSKSRFISQIKREMNRHDFSDNLMEERDNPMSFMQVTRNCVSAHMNDNDWNERCKLIGDARNYMELMKSAYTEHYSISNRCKLFTIYKLNIISKLVKPNYIFSNHGLCALDVNNCKWCKIDNHYEIWNDFRLRKIYNNMMNFIRALVKSNTNVGHCSSHELVYKCISSVFIVWKIEKWNDSVRTLFEYLEPVEINHVEYVLLDHELSWEMSGVIMQIMNGKVPRILSFDDVKKIMGAIIYDWFDVRYMRETPVIVSTTNELRKLNKDNNLMDGYDYELSDIE.

Positions 1–81 (MATFKDACYH…CFLDEEPHLL (81 aa)) are RNA-binding. The segment at 42–79 (CLDCCQHTDLTYCRGCALFHVCQWCSRYNRCFLDEEPH) is zinc-binding domain. The tract at residues 82–176 (RMRTFRNEIN…ENQTPFHFVN (95 aa)) is important for cytoskeleton localization. Positions 320-491 (DVNNCKWCKI…GYDYELSDIE (172 aa)) are interaction with host IRF3. Residues 485-488 (YELS) carry the pLxIS motif motif.

Belongs to the rotavirus NSP1 family. As to quaternary structure, interacts (via C-terminus) with host IRF3; this interaction leads to IRF3 degradation. Interacts with host IRF7; this interaction leads to IRF7 degradation. Interacts with host CUL1 and CUL3.

The protein resides in the host cytoplasm. Its subcellular location is the host cytoskeleton. Plays a role in the inhibition of host innate immunity by inducing the degradation of key host factors required to activate interferon production such as IRF3, IRF5 or IRF7. Associates with components of cullin RING ligases (CRLs) including CUL1 or CUL3, which are essential multisubunit ubiquitination complexes, to modulate their activities. The sequence is that of Non-structural protein 1 from Rotavirus A (isolate RVA/Cow/United States/B223/1983/G10P8[11]) (RV-A).